The following is a 573-amino-acid chain: Squalene monooxygenase (573 aa).

Over Met-1–Asp-19 the chain is Cytoplasmic. The segment at Met-1 to Lys-99 is interaction with MARCHF6. Residues Val-20 to Val-40 lie within the membrane without spanning it. The Cytoplasmic portion of the chain corresponds to Leu-41–His-573. Positions Gln-61–Leu-72 are required for degradation in response to high membrane cholesterol levels. Positions Glu-100–His-573 are sufficient for catalytic activity. Residues Val-132–Leu-133, Glu-152–Arg-153, Arg-160, Arg-233, Val-249, Asp-407, and Met-420 contribute to the FAD site. Residues Pro-515–His-573 form a hydrophobic; mediates interaction with membranes region.

The protein belongs to the squalene monooxygenase family. In terms of assembly, interacts (via N-terminal domain) with MARCHF6. Interacts with SMIM22; this interaction modulates lipid droplet formation. It depends on FAD as a cofactor. Ubiquitinated by MARCHF6 in response to high cholesterol levels in intracellular membranes, leading to proteasomal degradation. As to expression, detected in lever (at protein level).

It is found in the microsome membrane. Its subcellular location is the endoplasmic reticulum membrane. The catalysed reaction is squalene + reduced [NADPH--hemoprotein reductase] + O2 = (S)-2,3-epoxysqualene + oxidized [NADPH--hemoprotein reductase] + H2O + H(+). Its pathway is terpene metabolism; lanosterol biosynthesis; lanosterol from farnesyl diphosphate: step 2/3. Inhibited by NB-598 ((E)N-ethyl-N-(6,6-dimethyl-2-hepten-4-ynyl)-3-[(3,3'-bi-thiophen-5-yl)methoxy]benzene-methanamine). Contrary to fungal enzymes, the mammalian enzyme is only slightly inhibited by terbinafine. Its function is as follows. Catalyzes the stereospecific oxidation of squalene to (S)-2,3-epoxysqualene, and is considered to be a rate-limiting enzyme in steroid biosynthesis. In Rattus norvegicus (Rat), this protein is Squalene monooxygenase (Sqle).